Here is an 85-residue protein sequence, read N- to C-terminus: Large ribosomal subunit protein bL27 (85 aa).

Residues 1 to 20 (MATKKAGGSTRNGRDSEAKR) are disordered.

The protein belongs to the bacterial ribosomal protein bL27 family.

This is Large ribosomal subunit protein bL27 from Histophilus somni (strain 129Pt) (Haemophilus somnus).